Here is a 195-residue protein sequence, read N- to C-terminus: MYKCDKPLILASSSPRRKAFLDQLGLEYSVRVKSIDEFAQPEESPEAFVCRMALEKGSAVSYQHPDSWVIAADTIVCLDQKILGKPRDSEDAVAMLCRLAGRSHTVMTAFAIICEKEKISEVQLVETSVYFSSFGEVEARAYVATGEPLDKAGSYGIQGVGALFVRKIAGSYSNVVGLPLAELVERLLYYSVISI.

Catalysis depends on Asp-73, which acts as the Proton acceptor.

The protein belongs to the Maf family. YhdE subfamily. It depends on a divalent metal cation as a cofactor.

It localises to the cytoplasm. It carries out the reaction dTTP + H2O = dTMP + diphosphate + H(+). The catalysed reaction is UTP + H2O = UMP + diphosphate + H(+). Nucleoside triphosphate pyrophosphatase that hydrolyzes dTTP and UTP. May have a dual role in cell division arrest and in preventing the incorporation of modified nucleotides into cellular nucleic acids. This Desulfotalea psychrophila (strain LSv54 / DSM 12343) protein is dTTP/UTP pyrophosphatase.